Reading from the N-terminus, the 413-residue chain is Serine hydroxymethyltransferase (413 aa).

(6S)-5,6,7,8-tetrahydrofolate-binding positions include L119 and 123–125 (GHL). At K228 the chain carries N6-(pyridoxal phosphate)lysine.

It belongs to the SHMT family. As to quaternary structure, homodimer. Pyridoxal 5'-phosphate is required as a cofactor.

The protein localises to the cytoplasm. The enzyme catalyses (6R)-5,10-methylene-5,6,7,8-tetrahydrofolate + glycine + H2O = (6S)-5,6,7,8-tetrahydrofolate + L-serine. Its pathway is one-carbon metabolism; tetrahydrofolate interconversion. It participates in amino-acid biosynthesis; glycine biosynthesis; glycine from L-serine: step 1/1. Functionally, catalyzes the reversible interconversion of serine and glycine with tetrahydrofolate (THF) serving as the one-carbon carrier. This reaction serves as the major source of one-carbon groups required for the biosynthesis of purines, thymidylate, methionine, and other important biomolecules. Also exhibits THF-independent aldolase activity toward beta-hydroxyamino acids, producing glycine and aldehydes, via a retro-aldol mechanism. This chain is Serine hydroxymethyltransferase, found in Desulfatibacillum aliphaticivorans.